A 631-amino-acid polypeptide reads, in one-letter code: Vacuolar-sorting receptor 6 (631 aa).

The signal sequence occupies residues 1–25 (MSLIHKGATLALFLALTMVVNGVFG). Residues 26–563 (RFIVEKSSVT…CIERSGSRIG (538 aa)) are Lumenal-facing. Residues 57–165 (NYGGYMIGSV…SFANTLKQAL (109 aa)) form the PA domain. Residues asparagine 294 and asparagine 431 are each glycosylated (N-linked (GlcNAc...) asparagine). EGF-like domains lie at 413–463 (ETNE…TSCE) and 494–540 (ETSG…FECK). Disulfide bonds link cysteine 417/cysteine 435, cysteine 424/cysteine 444, cysteine 446/cysteine 462, cysteine 498/cysteine 511, and cysteine 530/cysteine 539. A helical transmembrane segment spans residues 564-584 (WFPTFVILAAVASICVGGYVF). Topologically, residues 585–631 (YKYRLRSYMDSEIMAIMSQYMPLESQNTTDPMTGESQHQQLRLTSAA) are cytoplasmic. The Tyrosine-based internalization motif motif lies at 604-607 (YMPL). A disordered region spans residues 610 to 631 (QNTTDPMTGESQHQQLRLTSAA).

Belongs to the VSR (BP-80) family. In terms of tissue distribution, expressed in seedlings, roots, leaves, flowers and siliques.

Its subcellular location is the membrane. The protein localises to the golgi apparatus membrane. The protein resides in the cytoplasmic vesicle. It is found in the clathrin-coated vesicle membrane. It localises to the prevacuolar compartment membrane. In terms of biological role, vacuolar-sorting receptor (VSR) involved in clathrin-coated vesicles sorting from Golgi apparatus to vacuoles. In Arabidopsis thaliana (Mouse-ear cress), this protein is Vacuolar-sorting receptor 6 (VSR6).